Consider the following 69-residue polypeptide: MSKFLIKLITLYQKWISPLKGQTCRFYPTCSSYSISAYNTYGFFRGTYLTIRRLLKCHPFHPGGFDPLK.

This sequence belongs to the UPF0161 family.

The protein resides in the cell membrane. Functionally, could be involved in insertion of integral membrane proteins into the membrane. This is Putative membrane protein insertion efficiency factor from Alkaliphilus metalliredigens (strain QYMF).